The following is an 814-amino-acid chain: Lon protease (814 aa).

The segment at 1-20 is disordered; sequence MANEAHNIEHTDPEFRDDSA. One can recognise a Lon N-terminal domain in the interval 25-219; sequence LPLLPVRDTV…KINQHLAKEL (195 aa). Residue 372 to 379 participates in ATP binding; that stretch reads GPPGVGKT. In terms of domain architecture, Lon proteolytic spans 610-792; sequence TKRAGVVVGL…DEVLEIALPS (183 aa). Catalysis depends on residues S697 and K740.

Belongs to the peptidase S16 family. In terms of assembly, homohexamer. Organized in a ring with a central cavity.

The protein localises to the cytoplasm. It catalyses the reaction Hydrolysis of proteins in presence of ATP.. Functionally, ATP-dependent serine protease that mediates the selective degradation of mutant and abnormal proteins as well as certain short-lived regulatory proteins. Required for cellular homeostasis and for survival from DNA damage and developmental changes induced by stress. Degrades polypeptides processively to yield small peptide fragments that are 5 to 10 amino acids long. Binds to DNA in a double-stranded, site-specific manner. The chain is Lon protease from Koribacter versatilis (strain Ellin345).